Here is an 879-residue protein sequence, read N- to C-terminus: Alanine--tRNA ligase (879 aa).

4 residues coordinate Zn(2+): His564, His568, Cys666, and His670.

Belongs to the class-II aminoacyl-tRNA synthetase family. Zn(2+) is required as a cofactor.

The protein resides in the cytoplasm. The enzyme catalyses tRNA(Ala) + L-alanine + ATP = L-alanyl-tRNA(Ala) + AMP + diphosphate. Functionally, catalyzes the attachment of alanine to tRNA(Ala) in a two-step reaction: alanine is first activated by ATP to form Ala-AMP and then transferred to the acceptor end of tRNA(Ala). Also edits incorrectly charged Ser-tRNA(Ala) and Gly-tRNA(Ala) via its editing domain. This chain is Alanine--tRNA ligase, found in Crocosphaera subtropica (strain ATCC 51142 / BH68) (Cyanothece sp. (strain ATCC 51142)).